Reading from the N-terminus, the 245-residue chain is Probable 2-phosphosulfolactate phosphatase (245 aa).

This sequence belongs to the ComB family. The cofactor is Mg(2+).

The catalysed reaction is (2R)-O-phospho-3-sulfolactate + H2O = (2R)-3-sulfolactate + phosphate. In Trichormus variabilis (strain ATCC 29413 / PCC 7937) (Anabaena variabilis), this protein is Probable 2-phosphosulfolactate phosphatase.